Reading from the N-terminus, the 108-residue chain is UPF0060 membrane protein Sca_1835 (108 aa).

The next 4 helical transmembrane spans lie at 5 to 25 (ILIF…IWLW), 34 to 54 (FGLL…FQVF), 60 to 80 (VYAA…YVFD), and 84 to 104 (PDKY…IMLL).

Belongs to the UPF0060 family.

Its subcellular location is the cell membrane. The polypeptide is UPF0060 membrane protein Sca_1835 (Staphylococcus carnosus (strain TM300)).